The sequence spans 415 residues: Gamma-glutamyl phosphate reductase (415 aa).

This sequence belongs to the gamma-glutamyl phosphate reductase family.

It localises to the cytoplasm. The catalysed reaction is L-glutamate 5-semialdehyde + phosphate + NADP(+) = L-glutamyl 5-phosphate + NADPH + H(+). Its pathway is amino-acid biosynthesis; L-proline biosynthesis; L-glutamate 5-semialdehyde from L-glutamate: step 2/2. Its function is as follows. Catalyzes the NADPH-dependent reduction of L-glutamate 5-phosphate into L-glutamate 5-semialdehyde and phosphate. The product spontaneously undergoes cyclization to form 1-pyrroline-5-carboxylate. The sequence is that of Gamma-glutamyl phosphate reductase from Ligilactobacillus salivarius (strain UCC118) (Lactobacillus salivarius).